We begin with the raw amino-acid sequence, 382 residues long: ATP phosphoribosyltransferase regulatory subunit (382 aa).

It belongs to the class-II aminoacyl-tRNA synthetase family. HisZ subfamily. As to quaternary structure, heteromultimer composed of HisG and HisZ subunits.

It localises to the cytoplasm. It participates in amino-acid biosynthesis; L-histidine biosynthesis; L-histidine from 5-phospho-alpha-D-ribose 1-diphosphate: step 1/9. In terms of biological role, required for the first step of histidine biosynthesis. May allow the feedback regulation of ATP phosphoribosyltransferase activity by histidine. This is ATP phosphoribosyltransferase regulatory subunit from Burkholderia pseudomallei (strain 1106a).